The sequence spans 541 residues: Ankyrin repeat domain-containing protein 13C (541 aa).

Residues 1-20 (MTGEKIRSLRRDHKPSKEEG) are compositionally biased toward basic and acidic residues. The disordered stretch occupies residues 1–27 (MTGEKIRSLRRDHKPSKEEGDLLEPGD). ANK repeat units follow at residues 111 to 142 (PAHY…QKDN), 143 to 172 (HGNT…PVKV), and 176 to 205 (QGWS…QQSR). Position 411 is a phosphoserine (Ser-411).

It localises to the endoplasmic reticulum membrane. Its function is as follows. Acts as a molecular chaperone for G protein-coupled receptors, regulating their biogenesis and exit from the ER. The protein is Ankyrin repeat domain-containing protein 13C (ANKRD13C) of Homo sapiens (Human).